Reading from the N-terminus, the 596-residue chain is Aspartate--tRNA(Asp/Asn) ligase (596 aa).

E175 serves as a coordination point for L-aspartate. The aspartate stretch occupies residues 199–202; it reads QQYK. Positions 221 and 454 each coordinate L-aspartate. 221-223 contacts ATP; that stretch reads RDE. E488 is a binding site for ATP. R495 is an L-aspartate binding site. 540–543 provides a ligand contact to ATP; that stretch reads GVDR.

It belongs to the class-II aminoacyl-tRNA synthetase family. Type 1 subfamily. As to quaternary structure, homodimer.

It is found in the cytoplasm. The enzyme catalyses tRNA(Asx) + L-aspartate + ATP = L-aspartyl-tRNA(Asx) + AMP + diphosphate. Its function is as follows. Aspartyl-tRNA synthetase with relaxed tRNA specificity since it is able to aspartylate not only its cognate tRNA(Asp) but also tRNA(Asn). Reaction proceeds in two steps: L-aspartate is first activated by ATP to form Asp-AMP and then transferred to the acceptor end of tRNA(Asp/Asn). This is Aspartate--tRNA(Asp/Asn) ligase from Bartonella henselae (strain ATCC 49882 / DSM 28221 / CCUG 30454 / Houston 1) (Rochalimaea henselae).